A 363-amino-acid chain; its full sequence is Type 3 secretion system translocon protein SctB (363 aa).

Residues 1–16 (MEIQNTKPTQTLYTDI) show a composition bias toward polar residues. The disordered stretch occupies residues 1-30 (MEIQNTKPTQTLYTDISTKQTQSSSETQKS). Residues 17–30 (STKQTQSSSETQKS) are compositionally biased toward low complexity. Residues 33-73 (YQQIAAHIPLNVGKNPVLTTTLNDDQLLKLSEQVQHDSEII) are ipgC chaperone binding domain. Residues 99–120 (ISSLSSNAVSLIISVAVLLSAL) form a helical membrane-spanning segment.

The protein belongs to the SctB/SipC family. In terms of assembly, the core secretion machinery of the T3SS is composed of approximately 20 different proteins, including cytoplasmic components, a base, an export apparatus and a needle. This subunit is involved in the formation of a pore, called the translocon, in host membrane. Interacts with IpaB/SctE. Interacts with the molecular chaperone IpgC, which prevents premature association with IpaB/SctE within the cytoplasm of Shigella cells. Does not interact with CDC42 or RAC1 GTPases in vitro.

It localises to the secreted. Its subcellular location is the host membrane. Interaction with the membrane is affected by the pH. In terms of biological role, component of the type III secretion system (T3SS), also called injectisome, which is used to inject bacterial effector proteins into eukaryotic host cells. IpaB/SctE and IpaC/SctB are inserted into the host membrane where they form a pore and allow the translocation of effector proteins into the cytosol of target cells. Induction and secretion of IpaC/SctB comprise the final step in triggering the induction of full type III secretion. Functionally, required for efficient dissemination. Necessary for lysis of the two cellular membranes that surround bacteria in protrusions during cell-to-cell spread. Contribute to actin nucleation in vitro, which may be a necessary step in Shigella invasion. The polypeptide is Type 3 secretion system translocon protein SctB (Shigella flexneri).